The chain runs to 348 residues: Erlin-1 (348 aa).

At 1-7 (MNMTQAR) the chain is on the cytoplasmic side. The helical transmembrane segment at 8 to 28 (LLVAAVVGLVAILLYASIHKI) threads the bilayer. Residues 29–348 (EEGHLAVYYR…SPIQNKENAG (320 aa)) lie on the Lumenal side of the membrane. Asn108 is a glycosylation site (N-linked (GlcNAc...) asparagine). Lys269 bears the N6-acetyllysine mark. The span at 318-336 (DGRTGREDSLPPEEAREPS) shows a compositional bias: basic and acidic residues. Residues 318–348 (DGRTGREDSLPPEEAREPSGESPIQNKENAG) form a disordered region. The span at 339–348 (SPIQNKENAG) shows a compositional bias: polar residues.

It belongs to the band 7/mec-2 family. In terms of assembly, forms a heteromeric complex with ERLIN2. In complex with ERLIN2, interacts with RNF170. Interacts with AMFR and SYVN1. Post-translationally, deubiquitinated by USP25; leading to stabilization.

Its subcellular location is the endoplasmic reticulum membrane. In terms of biological role, component of the ERLIN1/ERLIN2 complex which mediates the endoplasmic reticulum-associated degradation (ERAD) of inositol 1,4,5-trisphosphate receptors (IP3Rs). Involved in regulation of cellular cholesterol homeostasis by regulation the SREBP signaling pathway. Binds cholesterol and may promote ER retention of the SCAP-SREBF complex. This Mus musculus (Mouse) protein is Erlin-1.